A 697-amino-acid polypeptide reads, in one-letter code: SPX domain-containing membrane protein At1g63010 (697 aa).

The 144-residue stretch at 2-145 (VAFGKYLQRK…GYRFADYYVK (144 aa)) folds into the SPX domain. Helical transmembrane passes span 247-267 (FNSL…TYII), 278-298 (LGAA…AQVF), 315-335 (LVFS…AYDA), 337-356 (SIAL…ARAV), 375-395 (AGFV…AGLL), and 411-431 (LPGW…CISF). The tract at residues 439–459 (EDGEKNNRNETTSDRVESSRV) is disordered. A run of 5 helical transmembrane segments spans residues 513–533 (LLIY…SSVI), 544–564 (SVAI…ILVG), 576–596 (ILLT…NLFV), 604–624 (VISG…NLSL), and 670–690 (LLNA…VATC).

It belongs to the major facilitator superfamily.

The protein localises to the membrane. In Arabidopsis thaliana (Mouse-ear cress), this protein is SPX domain-containing membrane protein At1g63010.